The following is a 417-amino-acid chain: Serine hydroxymethyltransferase (417 aa).

An N6-acetyllysine modification is found at lysine 54. (6S)-5,6,7,8-tetrahydrofolate-binding positions include leucine 121 and 125–127 (GHL). Lysine 229 is modified (N6-(pyridoxal phosphate)lysine). 3 positions are modified to N6-acetyllysine: lysine 250, lysine 285, and lysine 354. Position 355–357 (355–357 (SPF)) interacts with (6S)-5,6,7,8-tetrahydrofolate. At lysine 375 the chain carries N6-acetyllysine.

This sequence belongs to the SHMT family. As to quaternary structure, homodimer. Pyridoxal 5'-phosphate is required as a cofactor.

Its subcellular location is the cytoplasm. The catalysed reaction is (6R)-5,10-methylene-5,6,7,8-tetrahydrofolate + glycine + H2O = (6S)-5,6,7,8-tetrahydrofolate + L-serine. Its pathway is one-carbon metabolism; tetrahydrofolate interconversion. It participates in amino-acid biosynthesis; glycine biosynthesis; glycine from L-serine: step 1/1. In terms of biological role, catalyzes the reversible interconversion of serine and glycine with tetrahydrofolate (THF) serving as the one-carbon carrier. This reaction serves as the major source of one-carbon groups required for the biosynthesis of purines, thymidylate, methionine, and other important biomolecules. Also exhibits THF-independent aldolase activity toward beta-hydroxyamino acids, producing glycine and aldehydes, via a retro-aldol mechanism. This chain is Serine hydroxymethyltransferase, found in Escherichia coli O17:K52:H18 (strain UMN026 / ExPEC).